The chain runs to 459 residues: NADH oxidase (459 aa).

N10 is a binding site for FAD. Residue H11 is the Proton acceptor of the active site. 9 residues coordinate FAD: A12, D34, Q35, C44, V81, A110, S113, K143, and Y172. C44 acts as the Redox-active in catalysis. Residue C44 is modified to Cysteine sulfinic acid (-SO2H). NAD(+) is bound by residues I173, D192, Y201, and G256. D294 is an FAD binding site. Residue A310 coordinates NAD(+). 3 residues coordinate FAD: L311, A312, and S313. Position 341 (G341) interacts with NAD(+). Residue F439 participates in FAD binding.

It belongs to the class-III pyridine nucleotide-disulfide oxidoreductase family. Requires FAD as cofactor.

Its subcellular location is the secreted. It localises to the cell wall. The enzyme catalyses 2 NADH + O2 + 2 H(+) = 2 NAD(+) + 2 H2O. Catalyzes the four-electron reduction of molecular oxygen to water. Plays a role in redox balance maintenance. May be involved in mediating bacterial adhesion to host cells. May be considered a potential virulence factor. This Streptococcus pneumoniae (strain ATCC BAA-255 / R6) protein is NADH oxidase.